Reading from the N-terminus, the 254-residue chain is Cell division protein ZapD (254 aa).

It belongs to the ZapD family. As to quaternary structure, interacts with FtsZ.

Its subcellular location is the cytoplasm. Its function is as follows. Cell division factor that enhances FtsZ-ring assembly. Directly interacts with FtsZ and promotes bundling of FtsZ protofilaments, with a reduction in FtsZ GTPase activity. In Idiomarina loihiensis (strain ATCC BAA-735 / DSM 15497 / L2-TR), this protein is Cell division protein ZapD.